A 246-amino-acid chain; its full sequence is tRNA (guanine-N(1)-)-methyltransferase (246 aa).

S-adenosyl-L-methionine contacts are provided by residues G117 and 137 to 142 (IGDYVL).

Belongs to the RNA methyltransferase TrmD family. In terms of assembly, homodimer.

Its subcellular location is the cytoplasm. It catalyses the reaction guanosine(37) in tRNA + S-adenosyl-L-methionine = N(1)-methylguanosine(37) in tRNA + S-adenosyl-L-homocysteine + H(+). Specifically methylates guanosine-37 in various tRNAs. The chain is tRNA (guanine-N(1)-)-methyltransferase from Acinetobacter baumannii (strain SDF).